The following is a 371-amino-acid chain: Cytochrome b (371 aa).

4 helical membrane-spanning segments follow: residues 25–45 (FGSM…FLAV), 69–90 (WMMQ…YIHI), 105–125 (WMSG…GYVL), and 170–190 (FFAL…LHII). Residues His75 and His89 each coordinate heme b. Positions 174 and 188 each coordinate heme b. His193 contacts a ubiquinone. 4 consecutive transmembrane segments (helical) span residues 218 to 238 (HKDL…VSFF), 280 to 300 (LGGA…PFTH), 312 to 332 (FSQL…WAAT), and 339 to 358 (FIVI…LLIP).

It belongs to the cytochrome b family. As to quaternary structure, the cytochrome bc1 complex contains 3 respiratory subunits (MT-CYB, CYC1 and UQCRFS1), 2 core proteins (UQCRC1 and UQCRC2) and probably 6 low-molecular weight proteins. Heme b serves as cofactor.

It localises to the mitochondrion inner membrane. Functionally, component of the ubiquinol-cytochrome c reductase complex (complex III or cytochrome b-c1 complex) that is part of the mitochondrial respiratory chain. The b-c1 complex mediates electron transfer from ubiquinol to cytochrome c. Contributes to the generation of a proton gradient across the mitochondrial membrane that is then used for ATP synthesis. This Leiopython albertisii (Northern white-lipped python) protein is Cytochrome b (MT-CYB).